The sequence spans 1436 residues: Antigen WC1.1 (1436 aa).

A signal peptide spans 1–25; sequence MALGRHLSLRGLCVLLLGTMVGGQA. 3 consecutive SRCR domains span residues 28–131, 134–234, and 239–340; these read LRLK…VVCS, VRLA…VVCS, and VRLM…VICS. Cystine bridges form between cysteine 66/cysteine 130 and cysteine 97/cysteine 107. Asparagine 162 carries an N-linked (GlcNAc...) asparagine glycan. Disulfide bonds link cysteine 172–cysteine 233 and cysteine 203–cysteine 213. N-linked (GlcNAc...) asparagine glycosylation is found at asparagine 244 and asparagine 256. 3 disulfides stabilise this stretch: cysteine 265–cysteine 329, cysteine 278–cysteine 339, and cysteine 309–cysteine 319. N-linked (GlcNAc...) asparagine glycosylation is found at asparagine 351, asparagine 424, and asparagine 444. SRCR domains lie at 376 to 476, 481 to 581, 586 to 686, 689 to 789, and 794 to 895; these read LRLV…VICS, LRMV…IWCA, IRLV…VICS, VRLA…VVCS, and VQLM…VICS. Cystine bridges form between cysteine 401–cysteine 465, cysteine 414–cysteine 475, and cysteine 445–cysteine 455. Residues asparagine 499 and asparagine 531 are each glycosylated (N-linked (GlcNAc...) asparagine). Disulfide bonds link cysteine 506-cysteine 570, cysteine 519-cysteine 580, cysteine 550-cysteine 560, cysteine 611-cysteine 675, cysteine 624-cysteine 685, and cysteine 655-cysteine 665. Asparagine 717 carries N-linked (GlcNAc...) asparagine glycosylation. 2 cysteine pairs are disulfide-bonded: cysteine 727–cysteine 788 and cysteine 758–cysteine 768. N-linked (GlcNAc...) asparagine glycosylation is present at asparagine 799. 3 cysteine pairs are disulfide-bonded: cysteine 820-cysteine 884, cysteine 833-cysteine 894, and cysteine 864-cysteine 874. Asparagine 897, asparagine 979, and asparagine 999 each carry an N-linked (GlcNAc...) asparagine glycan. 3 consecutive SRCR domains span residues 931–1031, 1036–1136, and 1155–1255; these read LRLV…VICS, LRMV…ISCE, and LRLR…VRCS. 3 disulfide bridges follow: cysteine 956-cysteine 1020, cysteine 969-cysteine 1030, and cysteine 1000-cysteine 1010. 2 N-linked (GlcNAc...) asparagine glycosylation sites follow: asparagine 1054 and asparagine 1086. 3 disulfide bridges follow: cysteine 1061–cysteine 1125, cysteine 1074–cysteine 1135, and cysteine 1105–cysteine 1115. 2 N-linked (GlcNAc...) asparagine glycosylation sites follow: asparagine 1173 and asparagine 1214. 3 disulfide bridges follow: cysteine 1180/cysteine 1244, cysteine 1193/cysteine 1254, and cysteine 1224/cysteine 1234. Residues 1337–1410 form a disordered region; sequence EGLGSPDQMT…PGEGEESFWL (74 aa). Over residues 1348–1358 the composition is skewed to acidic residues; the sequence is VPDENYDDAEE. A compositionally biased stretch (polar residues) spans 1384–1393; the sequence is RSSQTGSFLN. N-linked (GlcNAc...) asparagine glycosylation is present at asparagine 1393.

In terms of tissue distribution, expressed on subsets of CD4-CD8- gamma delta T lymphocytes.

The protein resides in the secreted. The polypeptide is Antigen WC1.1 (Bos taurus (Bovine)).